Reading from the N-terminus, the 128-residue chain is Small ribosomal subunit protein bS6 (128 aa).

The protein belongs to the bacterial ribosomal protein bS6 family.

Binds together with bS18 to 16S ribosomal RNA. This is Small ribosomal subunit protein bS6 from Thermotoga petrophila (strain ATCC BAA-488 / DSM 13995 / JCM 10881 / RKU-1).